The following is a 118-amino-acid chain: Non-specific lipid-transfer protein 1 (118 aa).

A signal peptide spans 1–25 (MASLRVSCLVALMCMVVISAPMAEA). 4 disulfides stabilise this stretch: Cys-29–Cys-76, Cys-39–Cys-53, Cys-54–Cys-99, and Cys-74–Cys-113.

The protein belongs to the plant LTP family.

Its function is as follows. Plant non-specific lipid-transfer proteins transfer phospholipids as well as galactolipids across membranes. May play a role in wax or cutin deposition in the cell walls of expanding epidermal cells and certain secretory tissues. This chain is Non-specific lipid-transfer protein 1, found in Lens culinaris (Lentil).